A 113-amino-acid chain; its full sequence is Pro-FMRFamide-related neuropeptide FF (113 aa).

A signal peptide spans 1–20; that stretch reads MDSRQAAALLVLLLLIDGGC. A propeptide spanning residues 21–65 is cleaved from the precursor; it reads AEGPGGQQEDQLSAEEDSEPLPPQDAQTSGSLLHYLLQAMERPGR. The tract at residues 22-48 is disordered; sequence EGPGGQQEDQLSAEEDSEPLPPQDAQT. Phenylalanine 76 bears the Phenylalanine amide mark. Residues 79–92 constitute a propeptide that is removed on maturation; it reads NTQGSWRNEWLSPR. Phenylalanine 110 carries the phenylalanine amide modification.

It belongs to the FARP (FMRFamide related peptide) family.

It is found in the secreted. In terms of biological role, morphine modulating peptides. Have wide-ranging physiologic effects, including the modulation of morphine-induced analgesia, elevation of arterial blood pressure, and increased somatostatin secretion from the pancreas. Neuropeptide FF potentiates and sensitizes ASIC1 and ASIC3 channels. The polypeptide is Pro-FMRFamide-related neuropeptide FF (Homo sapiens (Human)).